The chain runs to 313 residues: Formimidoylglutamase (313 aa).

Mn(2+)-binding residues include H130, D155, H157, D159, D241, and D243.

Belongs to the arginase family. Requires Mn(2+) as cofactor.

The enzyme catalyses N-formimidoyl-L-glutamate + H2O = formamide + L-glutamate. The protein operates within amino-acid degradation; L-histidine degradation into L-glutamate; L-glutamate from N-formimidoyl-L-glutamate (hydrolase route): step 1/1. Functionally, catalyzes the conversion of N-formimidoyl-L-glutamate to L-glutamate and formamide. This chain is Formimidoylglutamase, found in Salmonella arizonae (strain ATCC BAA-731 / CDC346-86 / RSK2980).